The primary structure comprises 489 residues: 3-octaprenyl-4-hydroxybenzoate carboxy-lyase (489 aa).

Asn172 contacts Mn(2+). Prenylated FMN-binding positions include 175–177 (IYR), 189–191 (RWL), and 194–195 (RG). Glu238 provides a ligand contact to Mn(2+). The active-site Proton donor is the Asp287.

It belongs to the UbiD family. As to quaternary structure, homohexamer. Requires prenylated FMN as cofactor. Mn(2+) serves as cofactor.

It is found in the cell membrane. The catalysed reaction is a 4-hydroxy-3-(all-trans-polyprenyl)benzoate + H(+) = a 2-(all-trans-polyprenyl)phenol + CO2. It functions in the pathway cofactor biosynthesis; ubiquinone biosynthesis. Catalyzes the decarboxylation of 3-octaprenyl-4-hydroxy benzoate to 2-octaprenylphenol, an intermediate step in ubiquinone biosynthesis. The polypeptide is 3-octaprenyl-4-hydroxybenzoate carboxy-lyase (Tolumonas auensis (strain DSM 9187 / NBRC 110442 / TA 4)).